Reading from the N-terminus, the 189-residue chain is Translation initiation factor IF-3 (189 aa).

Belongs to the IF-3 family. In terms of assembly, monomer.

Its subcellular location is the cytoplasm. In terms of biological role, IF-3 binds to the 30S ribosomal subunit and shifts the equilibrium between 70S ribosomes and their 50S and 30S subunits in favor of the free subunits, thus enhancing the availability of 30S subunits on which protein synthesis initiation begins. This Corynebacterium glutamicum (strain ATCC 13032 / DSM 20300 / JCM 1318 / BCRC 11384 / CCUG 27702 / LMG 3730 / NBRC 12168 / NCIMB 10025 / NRRL B-2784 / 534) protein is Translation initiation factor IF-3.